Consider the following 810-residue polypeptide: Phospholipase D alpha 2 (810 aa).

The C2 domain maps to 1–126 (MEECLLHGRL…LHGEEVDRWV (126 aa)). Aspartate 187 serves as a coordination point for Ca(2+). The PLD phosphodiesterase 1 domain occupies 327 to 365 (TMFTHHQKIVVVDSEMPSGGSRSRRIVSFVGGLDLCDGR). Catalysis depends on residues histidine 332, lysine 334, and aspartate 339. Position 332 (histidine 332) interacts with a 1,2-diacyl-sn-glycero-3-phosphate. Residues histidine 371 and histidine 405 each contribute to the Ca(2+) site. A 1,2-diacyl-sn-glycero-3-phosphate contacts are provided by glutamine 521 and histidine 661. Positions 656–683 (FMIYVHTKMMIVDDEYIIIGSANINQRS) constitute a PLD phosphodiesterase 2 domain. Catalysis depends on residues histidine 661, lysine 663, and aspartate 668. Glutamate 722 serves as a coordination point for Ca(2+).

This sequence belongs to the phospholipase D family. C2-PLD subfamily. Requires Ca(2+) as cofactor. Highly expressed in roots, stems and flowers, moderately in leaves, seedlings and siliques. Not detected in dry seeds.

It is found in the cytoplasm. Its subcellular location is the membrane. The protein localises to the vacuole. The protein resides in the cytoplasmic vesicle. It localises to the clathrin-coated vesicle. It catalyses the reaction a 1,2-diacyl-sn-glycero-3-phosphocholine + H2O = a 1,2-diacyl-sn-glycero-3-phosphate + choline + H(+). Functionally, hydrolyzes glycerol-phospholipids at the terminal phosphodiesteric bond to generate phosphatidic acids (PA). Plays an important role in various cellular processes, including phytohormone action and response to stress, characterized by acidification of the cell. The protein is Phospholipase D alpha 2 of Arabidopsis thaliana (Mouse-ear cress).